Here is a 239-residue protein sequence, read N- to C-terminus: Fatty acid metabolism regulator protein (239 aa).

Positions 6–74 (QSPAGFAEEY…HGKPTKVNNF (69 aa)) constitute an HTH gntR-type domain. Positions 34 to 53 (ERELSELIGVTRTTLREVLQ) form a DNA-binding region, H-T-H motif.

As to quaternary structure, homodimer.

It localises to the cytoplasm. Its function is as follows. Multifunctional regulator of fatty acid metabolism. The sequence is that of Fatty acid metabolism regulator protein from Cronobacter sakazakii (strain ATCC BAA-894) (Enterobacter sakazakii).